The sequence spans 159 residues: Small ribosomal subunit protein uS7c (159 aa).

The tract at residues 137 to 159 (HAIRKKEETHKMAESNRAXAHYR) is disordered. Basic and acidic residues predominate over residues 141-150 (KKEETHKMAE).

This sequence belongs to the universal ribosomal protein uS7 family. In terms of assembly, part of the 30S ribosomal subunit.

It localises to the plastid. It is found in the chloroplast. In terms of biological role, one of the primary rRNA binding proteins, it binds directly to 16S rRNA where it nucleates assembly of the head domain of the 30S subunit. The polypeptide is Small ribosomal subunit protein uS7c (rps7) (Sciadopitys verticillata (Japanese umbrella-pine)).